A 391-amino-acid chain; its full sequence is Phosphoglycerate kinase (391 aa).

Residues 21–23 (DMN), Arg-36, 59–62 (HLGR), Arg-113, and Arg-146 each bind substrate. ATP contacts are provided by residues Lys-197, Glu-319, and 345-348 (GGDT).

It belongs to the phosphoglycerate kinase family. Monomer.

Its subcellular location is the cytoplasm. It catalyses the reaction (2R)-3-phosphoglycerate + ATP = (2R)-3-phospho-glyceroyl phosphate + ADP. It functions in the pathway carbohydrate degradation; glycolysis; pyruvate from D-glyceraldehyde 3-phosphate: step 2/5. The protein is Phosphoglycerate kinase of Chromobacterium violaceum (strain ATCC 12472 / DSM 30191 / JCM 1249 / CCUG 213 / NBRC 12614 / NCIMB 9131 / NCTC 9757 / MK).